Here is an 87-residue protein sequence, read N- to C-terminus: Large ribosomal subunit protein eL31 (87 aa).

Belongs to the eukaryotic ribosomal protein eL31 family.

The polypeptide is Large ribosomal subunit protein eL31 (Methanosphaerula palustris (strain ATCC BAA-1556 / DSM 19958 / E1-9c)).